Reading from the N-terminus, the 489-residue chain is UDP-N-acetylmuramoylalanine--D-glutamate ligase (489 aa).

126–132 (GTNGKTT) is a binding site for ATP.

It belongs to the MurCDEF family.

It localises to the cytoplasm. It catalyses the reaction UDP-N-acetyl-alpha-D-muramoyl-L-alanine + D-glutamate + ATP = UDP-N-acetyl-alpha-D-muramoyl-L-alanyl-D-glutamate + ADP + phosphate + H(+). It functions in the pathway cell wall biogenesis; peptidoglycan biosynthesis. Cell wall formation. Catalyzes the addition of glutamate to the nucleotide precursor UDP-N-acetylmuramoyl-L-alanine (UMA). This is UDP-N-acetylmuramoylalanine--D-glutamate ligase from Mycolicibacterium paratuberculosis (strain ATCC BAA-968 / K-10) (Mycobacterium paratuberculosis).